Reading from the N-terminus, the 233-residue chain is Orotidine 5'-phosphate decarboxylase (233 aa).

Residues Asp-10, Lys-32, 60 to 69, Thr-115, Arg-176, Gln-185, Gly-205, and Arg-206 contribute to the substrate site; that span reads DLKLHDIPAT. Catalysis depends on Lys-62, which acts as the Proton donor.

Belongs to the OMP decarboxylase family. Type 1 subfamily. As to quaternary structure, homodimer.

It catalyses the reaction orotidine 5'-phosphate + H(+) = UMP + CO2. It functions in the pathway pyrimidine metabolism; UMP biosynthesis via de novo pathway; UMP from orotate: step 2/2. In terms of biological role, catalyzes the decarboxylation of orotidine 5'-monophosphate (OMP) to uridine 5'-monophosphate (UMP). This chain is Orotidine 5'-phosphate decarboxylase, found in Thermobifida fusca (strain YX).